A 326-amino-acid chain; its full sequence is Interleukin-1-binding protein (326 aa).

The N-terminal stretch at 1-18 (MSIPPVIFLPIFFYSSFV) is a signal peptide. Ig-like C2-type domains follow at residues 24–115 (PECI…LNLT), 122–208 (SNID…YDVT), and 221–322 (PPTM…KTVT). Cysteines 48 and 99 form a disulfide. Asn80, Asn103, and Asn113 each carry an N-linked (GlcNAc...) asparagine; by host glycan. A disulfide bridge connects residues Cys143 and Cys194. N-linked (GlcNAc...) asparagine; by host glycosylation is present at Asn237. An intrachain disulfide couples Cys242 to Cys309.

This sequence belongs to the interleukin-1 receptor family. As to quaternary structure, interacts with mouse Il1b.

It localises to the secreted. May reduce the host inflammatory response by interacting with inteleukin-1 beta (Il1b) and thus decreasing the association between IL1B and its cellular receptor. The sequence is that of Interleukin-1-binding protein (OPG201) from Bos taurus (Bovine).